A 243-amino-acid polypeptide reads, in one-letter code: Pyridoxine 5'-phosphate synthase (243 aa).

Residue Asn9 coordinates 3-amino-2-oxopropyl phosphate. 11 to 12 (DH) contacts 1-deoxy-D-xylulose 5-phosphate. Arg20 contributes to the 3-amino-2-oxopropyl phosphate binding site. His45 (proton acceptor) is an active-site residue. Residues Arg47 and His52 each coordinate 1-deoxy-D-xylulose 5-phosphate. Glu72 acts as the Proton acceptor in catalysis. Thr102 provides a ligand contact to 1-deoxy-D-xylulose 5-phosphate. The active-site Proton donor is His193. Residues Gly194 and 215 to 216 (GH) contribute to the 3-amino-2-oxopropyl phosphate site.

Belongs to the PNP synthase family. As to quaternary structure, homooctamer; tetramer of dimers.

It is found in the cytoplasm. The enzyme catalyses 3-amino-2-oxopropyl phosphate + 1-deoxy-D-xylulose 5-phosphate = pyridoxine 5'-phosphate + phosphate + 2 H2O + H(+). The protein operates within cofactor biosynthesis; pyridoxine 5'-phosphate biosynthesis; pyridoxine 5'-phosphate from D-erythrose 4-phosphate: step 5/5. Functionally, catalyzes the complicated ring closure reaction between the two acyclic compounds 1-deoxy-D-xylulose-5-phosphate (DXP) and 3-amino-2-oxopropyl phosphate (1-amino-acetone-3-phosphate or AAP) to form pyridoxine 5'-phosphate (PNP) and inorganic phosphate. The polypeptide is Pyridoxine 5'-phosphate synthase (Shigella sonnei (strain Ss046)).